The sequence spans 209 residues: Octanoyltransferase (209 aa).

Positions 30 to 209 (DHKPEIIYLV…IQTEFNKIFK (180 aa)) constitute a BPL/LPL catalytic domain. Substrate-binding positions include 69-76 (RGGKFTFH), 143-145 (AIG), and 156-158 (GVA). The active-site Acyl-thioester intermediate is the Cys174.

Belongs to the LipB family.

The protein resides in the cytoplasm. The enzyme catalyses octanoyl-[ACP] + L-lysyl-[protein] = N(6)-octanoyl-L-lysyl-[protein] + holo-[ACP] + H(+). It participates in protein modification; protein lipoylation via endogenous pathway; protein N(6)-(lipoyl)lysine from octanoyl-[acyl-carrier-protein]: step 1/2. Catalyzes the transfer of endogenously produced octanoic acid from octanoyl-acyl-carrier-protein onto the lipoyl domains of lipoate-dependent enzymes. Lipoyl-ACP can also act as a substrate although octanoyl-ACP is likely to be the physiological substrate. The sequence is that of Octanoyltransferase from Rickettsia conorii (strain ATCC VR-613 / Malish 7).